The sequence spans 539 residues: Protein mushroom body miniature (539 aa).

Residues 1 to 11 (MHNSGGQSGWN) show a composition bias toward polar residues. The tract at residues 1–345 (MHNSGGQSGW…EDDKKARKQK (345 aa)) is disordered. Residues 67–79 (KFRDPQQELDNHQ) are compositionally biased toward basic and acidic residues. Residues 80–89 (PNKRGGRRNR) show a composition bias toward basic residues. Residues 90-101 (GGGGGGGGWGGR) show a composition bias toward gly residues. Positions 199–208 (IKKEKEMEHK) are enriched in basic and acidic residues. Over residues 268–289 (VASTPKPKAVKPVSSSDSSTSD) the composition is skewed to low complexity. Ser288 and Ser290 each carry phosphoserine. Phosphothreonine occurs at positions 292 and 327. The segment covering 327 to 336 (TDEEESTEPE) has biased composition (acidic residues). Ser332 is subject to Phosphoserine. The residue at position 333 (Thr333) is a Phosphothreonine. 2 consecutive CCHC-type zinc fingers follow at residues 354–367 (CGIC…SFQC) and 371–386 (CRNC…NCPN). A disordered region spans residues 421 to 513 (VTAPVSAKPK…AASLPPQVFP (93 aa)). The span at 428 to 447 (KPKKDKKASIKKIKKSSQKR) shows a compositional bias: basic residues. Residues 456-480 (DEEDDEEDDDEDEDDSSESDDSESS) are compositionally biased toward acidic residues.

Post-translationally, may be phosphorylated in vivo by CkIIalpha. mbm and CkIIalpha colocalize to the nucleolus and mbm is phosphorylated in vitro by CkIIalpha. In terms of tissue distribution, shows widespread expression in third instar larval brain with no apparent difference between males and females (at protein level). Detected at low levels in the mushroom body neuropil and is also expressed in many cells of the brain outside the mushroom body (at protein level). Not detected in third instar larval brain cells in anaphase (at protein level).

Its subcellular location is the nucleus. The protein resides in the nucleolus. The protein localises to the cytoplasm. Required for small ribosomal subunit biogenesis in neuroblasts. Plays a role in mushroom body development. The protein is Protein mushroom body miniature of Drosophila melanogaster (Fruit fly).